Here is a 364-residue protein sequence, read N- to C-terminus: Aminomethyltransferase (364 aa).

This sequence belongs to the GcvT family. The glycine cleavage system is composed of four proteins: P, T, L and H.

The catalysed reaction is N(6)-[(R)-S(8)-aminomethyldihydrolipoyl]-L-lysyl-[protein] + (6S)-5,6,7,8-tetrahydrofolate = N(6)-[(R)-dihydrolipoyl]-L-lysyl-[protein] + (6R)-5,10-methylene-5,6,7,8-tetrahydrofolate + NH4(+). The glycine cleavage system catalyzes the degradation of glycine. This is Aminomethyltransferase from Shigella sonnei (strain Ss046).